Here is a 271-residue protein sequence, read N- to C-terminus: Imidazole glycerol phosphate synthase subunit HisF (271 aa).

Residues Asp12 and Asp136 contribute to the active site.

The protein belongs to the HisA/HisF family. Heterodimer of HisH and HisF.

It localises to the cytoplasm. The catalysed reaction is 5-[(5-phospho-1-deoxy-D-ribulos-1-ylimino)methylamino]-1-(5-phospho-beta-D-ribosyl)imidazole-4-carboxamide + L-glutamine = D-erythro-1-(imidazol-4-yl)glycerol 3-phosphate + 5-amino-1-(5-phospho-beta-D-ribosyl)imidazole-4-carboxamide + L-glutamate + H(+). It functions in the pathway amino-acid biosynthesis; L-histidine biosynthesis; L-histidine from 5-phospho-alpha-D-ribose 1-diphosphate: step 5/9. Its function is as follows. IGPS catalyzes the conversion of PRFAR and glutamine to IGP, AICAR and glutamate. The HisF subunit catalyzes the cyclization activity that produces IGP and AICAR from PRFAR using the ammonia provided by the HisH subunit. This chain is Imidazole glycerol phosphate synthase subunit HisF, found in Natronomonas pharaonis (strain ATCC 35678 / DSM 2160 / CIP 103997 / JCM 8858 / NBRC 14720 / NCIMB 2260 / Gabara) (Halobacterium pharaonis).